A 66-amino-acid polypeptide reads, in one-letter code: ATP synthase F(0) complex subunit 8 (66 aa).

A helical membrane pass occupies residues 8–24 (TWLTMILSMFLVLFIIF). Lys54 is subject to N6-acetyllysine; alternate. At Lys54 the chain carries N6-succinyllysine; alternate. The residue at position 57 (Lys57) is an N6-acetyllysine.

Belongs to the ATPase protein 8 family. In terms of assembly, component of the ATP synthase complex composed at least of ATP5F1A/subunit alpha, ATP5F1B/subunit beta, ATP5MC1/subunit c (homooctomer), MT-ATP6/subunit a, MT-ATP8/subunit 8, ATP5ME/subunit e, ATP5MF/subunit f, ATP5MG/subunit g, ATP5MK/subunit k, ATP5MJ/subunit j, ATP5F1C/subunit gamma, ATP5F1D/subunit delta, ATP5F1E/subunit epsilon, ATP5PF/subunit F6, ATP5PB/subunit b, ATP5PD/subunit d, ATP5PO/subunit OSCP. ATP synthase complex consists of a soluble F(1) head domain (subunits alpha(3) and beta(3)) - the catalytic core - and a membrane F(0) domain - the membrane proton channel (subunits c, a, 8, e, f, g, k and j). These two domains are linked by a central stalk (subunits gamma, delta, and epsilon) rotating inside the F1 region and a stationary peripheral stalk (subunits F6, b, d, and OSCP). Interacts with PRICKLE3.

It localises to the mitochondrion membrane. In terms of biological role, subunit 8, of the mitochondrial membrane ATP synthase complex (F(1)F(0) ATP synthase or Complex V) that produces ATP from ADP in the presence of a proton gradient across the membrane which is generated by electron transport complexes of the respiratory chain. ATP synthase complex consist of a soluble F(1) head domain - the catalytic core - and a membrane F(1) domain - the membrane proton channel. These two domains are linked by a central stalk rotating inside the F(1) region and a stationary peripheral stalk. During catalysis, ATP synthesis in the catalytic domain of F(1) is coupled via a rotary mechanism of the central stalk subunits to proton translocation. In vivo, can only synthesize ATP although its ATP hydrolase activity can be activated artificially in vitro. Part of the complex F(0) domain. The polypeptide is ATP synthase F(0) complex subunit 8 (Ovis aries (Sheep)).